The sequence spans 577 residues: Serine/threonine-protein kinase AGC1-5 (577 aa).

Over residues 1–12 (MDLASKKNTANV) the composition is skewed to polar residues. Residues 1 to 151 (MDLASKKNTA…DYAYGDNLVG (151 aa)) are disordered. The segment covering 44 to 55 (PHFDPKKMDPLV) has biased composition (basic and acidic residues). Polar residues-rich tracts occupy residues 69–87 (TRGTNSEGDLKHNTYSSDG) and 110–120 (LTTSETYSPSA). The region spanning 185–509 (FRLLKRLGYG…ATEIKQHPFF (325 aa)) is the Protein kinase domain. ATP-binding positions include 191–199 (LGYGDIGSV) and lysine 214. The active-site Proton acceptor is aspartate 310. Positions 510-577 (EGVNWALVRS…DTAYIDFEYF (68 aa)) constitute an AGC-kinase C-terminal domain.

It belongs to the protein kinase superfamily. AGC Ser/Thr protein kinase family. As to quaternary structure, interacts with PDPK1/PDK1. In terms of processing, autophosphorylated and phosphorylated by PDPK1/PDK1. Specifically expressed in pollen grains.

The enzyme catalyses L-seryl-[protein] + ATP = O-phospho-L-seryl-[protein] + ADP + H(+). It carries out the reaction L-threonyl-[protein] + ATP = O-phospho-L-threonyl-[protein] + ADP + H(+). Its activity is regulated as follows. Activated by PDPK1/PDK1. Functionally, functions redudantly with AGC1-7 as signaling component in the pollen tube. Required for polarized growth of pollen tubes. The chain is Serine/threonine-protein kinase AGC1-5 from Arabidopsis thaliana (Mouse-ear cress).